Here is a 277-residue protein sequence, read N- to C-terminus: Anamorsin homolog (277 aa).

The tract at residues 1 to 134 (MALQGNVAIL…PFYPEFSDAV (134 aa)) is N-terminal SAM-like domain. The segment at 135 to 191 (SFTSKKQSFESAAIPLAVKSTTTQPIKKWTVLADDFGDDQDDDIIDEDTLLDDTDEV) is linker. [2Fe-2S] cluster contacts are provided by cysteine 199, cysteine 210, cysteine 213, and cysteine 215. The tract at residues 199–215 (CGDAVGGKKRACKNCTC) is fe-S binding site A. [4Fe-4S] cluster-binding residues include cysteine 238, cysteine 241, cysteine 249, and cysteine 252. 2 short sequence motifs (cx2C motif) span residues 238–241 (CGNC) and 249–252 (CGSC). The segment at 238 to 252 (CGNCFKGDAFRCGSC) is fe-S binding site B.

The protein belongs to the anamorsin family. In terms of assembly, monomer. Requires [2Fe-2S] cluster as cofactor. The cofactor is [4Fe-4S] cluster.

Its subcellular location is the cytoplasm. It is found in the mitochondrion intermembrane space. In terms of biological role, component of the cytosolic iron-sulfur (Fe-S) protein assembly (CIA) machinery. Required for the maturation of extramitochondrial Fe-S proteins. Part of an electron transfer chain functioning in an early step of cytosolic Fe-S biogenesis, facilitating the de novo assembly of a [4Fe-4S] cluster on the cytosolic Fe-S scaffold complex. Electrons are transferred from NADPH via a FAD- and FMN-containing diflavin oxidoreductase. Together with the diflavin oxidoreductase, also required for the assembly of the diferric tyrosyl radical cofactor of ribonucleotide reductase (RNR), probably by providing electrons for reduction during radical cofactor maturation in the catalytic small subunit. The protein is Anamorsin homolog of Phytophthora infestans (strain T30-4) (Potato late blight agent).